A 195-amino-acid polypeptide reads, in one-letter code: Probable DNA-directed RNA polymerase subunit delta (195 aa).

Residues 14-81 form the HTH HARE-type domain; the sequence is LSMIEVAHAI…GDNTWGLRAW (68 aa). The segment at 91 to 195 is disordered; sequence TVGETEDEED…DEEDKEDDEE (105 aa). 2 stretches are compositionally biased toward acidic residues: residues 116–171 and 179–195; these read TDDD…EDQL and FGDDEEEDEEDKEDDEE.

It belongs to the RpoE family. As to quaternary structure, RNAP is composed of a core of 2 alpha, a beta and a beta' subunits. The core is associated with a delta subunit and one of several sigma factors.

Its function is as follows. Participates in both the initiation and recycling phases of transcription. In the presence of the delta subunit, RNAP displays an increased specificity of transcription, a decreased affinity for nucleic acids, and an increased efficiency of RNA synthesis because of enhanced recycling. The chain is Probable DNA-directed RNA polymerase subunit delta from Limosilactobacillus fermentum (strain NBRC 3956 / LMG 18251) (Lactobacillus fermentum).